A 194-amino-acid chain; its full sequence is Putative 3-methyladenine DNA glycosylase (194 aa).

The protein belongs to the DNA glycosylase MPG family.

This is Putative 3-methyladenine DNA glycosylase from Aeropyrum pernix (strain ATCC 700893 / DSM 11879 / JCM 9820 / NBRC 100138 / K1).